The following is a 485-amino-acid chain: Protein nucleotidyltransferase YdiU (485 aa).

Residues glycine 85, glycine 87, arginine 88, lysine 108, aspartate 120, glycine 121, arginine 171, and arginine 178 each contribute to the ATP site. Aspartate 249 (proton acceptor) is an active-site residue. 2 residues coordinate Mg(2+): asparagine 250 and aspartate 259. Residue aspartate 259 participates in ATP binding. Positions 462–485 (LPTTPNYQDPPADGDRSYQTFCGT) are disordered.

The protein belongs to the SELO family. It depends on Mg(2+) as a cofactor. Requires Mn(2+) as cofactor.

The enzyme catalyses L-seryl-[protein] + ATP = 3-O-(5'-adenylyl)-L-seryl-[protein] + diphosphate. It carries out the reaction L-threonyl-[protein] + ATP = 3-O-(5'-adenylyl)-L-threonyl-[protein] + diphosphate. The catalysed reaction is L-tyrosyl-[protein] + ATP = O-(5'-adenylyl)-L-tyrosyl-[protein] + diphosphate. It catalyses the reaction L-histidyl-[protein] + UTP = N(tele)-(5'-uridylyl)-L-histidyl-[protein] + diphosphate. The enzyme catalyses L-seryl-[protein] + UTP = O-(5'-uridylyl)-L-seryl-[protein] + diphosphate. It carries out the reaction L-tyrosyl-[protein] + UTP = O-(5'-uridylyl)-L-tyrosyl-[protein] + diphosphate. Its function is as follows. Nucleotidyltransferase involved in the post-translational modification of proteins. It can catalyze the addition of adenosine monophosphate (AMP) or uridine monophosphate (UMP) to a protein, resulting in modifications known as AMPylation and UMPylation. The chain is Protein nucleotidyltransferase YdiU from Teredinibacter turnerae (strain ATCC 39867 / T7901).